The chain runs to 119 residues: Large ribosomal subunit protein uL18 (119 aa).

This sequence belongs to the universal ribosomal protein uL18 family. Part of the 50S ribosomal subunit; part of the 5S rRNA/L5/L18/L25 subcomplex. Contacts the 5S and 23S rRNAs.

Its function is as follows. This is one of the proteins that bind and probably mediate the attachment of the 5S RNA into the large ribosomal subunit, where it forms part of the central protuberance. The polypeptide is Large ribosomal subunit protein uL18 (Staphylococcus aureus (strain Mu3 / ATCC 700698)).